A 729-amino-acid polypeptide reads, in one-letter code: Phosphoribosylformylglycinamidine synthase subunit PurL (729 aa).

Residue His-54 is part of the active site. Positions 57 and 96 each coordinate ATP. Residue Glu-98 participates in Mg(2+) binding. Substrate contacts are provided by residues 99 to 102 (SHNH) and Arg-121. Residue His-100 is the Proton acceptor of the active site. Asp-122 is a Mg(2+) binding site. Gln-245 is a binding site for substrate. Asp-273 provides a ligand contact to Mg(2+). 317 to 319 (ETQ) contributes to the substrate binding site. Asp-495 and Gly-532 together coordinate ATP. Asn-533 is a binding site for Mg(2+). Position 535 (Ser-535) interacts with substrate.

It belongs to the FGAMS family. As to quaternary structure, monomer. Part of the FGAM synthase complex composed of 1 PurL, 1 PurQ and 2 PurS subunits.

The protein localises to the cytoplasm. The enzyme catalyses N(2)-formyl-N(1)-(5-phospho-beta-D-ribosyl)glycinamide + L-glutamine + ATP + H2O = 2-formamido-N(1)-(5-O-phospho-beta-D-ribosyl)acetamidine + L-glutamate + ADP + phosphate + H(+). It functions in the pathway purine metabolism; IMP biosynthesis via de novo pathway; 5-amino-1-(5-phospho-D-ribosyl)imidazole from N(2)-formyl-N(1)-(5-phospho-D-ribosyl)glycinamide: step 1/2. In terms of biological role, part of the phosphoribosylformylglycinamidine synthase complex involved in the purines biosynthetic pathway. Catalyzes the ATP-dependent conversion of formylglycinamide ribonucleotide (FGAR) and glutamine to yield formylglycinamidine ribonucleotide (FGAM) and glutamate. The FGAM synthase complex is composed of three subunits. PurQ produces an ammonia molecule by converting glutamine to glutamate. PurL transfers the ammonia molecule to FGAR to form FGAM in an ATP-dependent manner. PurS interacts with PurQ and PurL and is thought to assist in the transfer of the ammonia molecule from PurQ to PurL. The polypeptide is Phosphoribosylformylglycinamidine synthase subunit PurL (Staphylococcus haemolyticus (strain JCSC1435)).